The primary structure comprises 339 residues: Probable thylakoid lumen protein sll0997 (339 aa).

The signal sequence occupies residues 1–26; it reads MAPYQSFHIGLLGLALASVWPLSACA.

It is found in the cellular thylakoid lumen. The sequence is that of Probable thylakoid lumen protein sll0997 from Synechocystis sp. (strain ATCC 27184 / PCC 6803 / Kazusa).